We begin with the raw amino-acid sequence, 528 residues long: Ribonuclease Y (528 aa).

The chain crosses the membrane as a helical span at residues 15 to 35; it reads SLLVFALICGSIIGYFLYSFF. Residues 217 to 277 enclose the KH domain; it reads NISVVNIPNE…IRREIAKKTL (61 aa). In terms of domain architecture, HD spans 343-436; the sequence is VLKHSLEVAF…VAIADTLSSA (94 aa).

It belongs to the RNase Y family.

The protein resides in the cell membrane. Endoribonuclease that initiates mRNA decay. The chain is Ribonuclease Y from Onion yellows phytoplasma (strain OY-M).